Here is a 31-residue protein sequence, read N- to C-terminus: leu operon leader peptide (31 aa).

Involved in control of the biosynthesis of leucine. This Buchnera aphidicola subsp. Rhopalosiphum padi protein is leu operon leader peptide (leuL).